The following is a 147-amino-acid chain: Nucleoside diphosphate kinase (147 aa).

Residues Lys11, Phe59, Arg87, Thr93, Arg104, and Asn114 each contribute to the ATP site. Residue His117 is the Pros-phosphohistidine intermediate of the active site.

Belongs to the NDK family. Homotetramer. Mg(2+) serves as cofactor.

Its subcellular location is the cytoplasm. The catalysed reaction is a 2'-deoxyribonucleoside 5'-diphosphate + ATP = a 2'-deoxyribonucleoside 5'-triphosphate + ADP. It catalyses the reaction a ribonucleoside 5'-diphosphate + ATP = a ribonucleoside 5'-triphosphate + ADP. Its function is as follows. Major role in the synthesis of nucleoside triphosphates other than ATP. The ATP gamma phosphate is transferred to the NDP beta phosphate via a ping-pong mechanism, using a phosphorylated active-site intermediate. The sequence is that of Nucleoside diphosphate kinase from Anaeromyxobacter dehalogenans (strain 2CP-1 / ATCC BAA-258).